Reading from the N-terminus, the 220-residue chain is 7-cyano-7-deazaguanine synthase (220 aa).

An ATP-binding site is contributed by 11–21; the sequence is VSGGMDSVTLM. Residues cysteine 186, cysteine 194, cysteine 197, and cysteine 200 each coordinate Zn(2+).

This sequence belongs to the QueC family. Requires Zn(2+) as cofactor.

It carries out the reaction 7-carboxy-7-deazaguanine + NH4(+) + ATP = 7-cyano-7-deazaguanine + ADP + phosphate + H2O + H(+). Its pathway is purine metabolism; 7-cyano-7-deazaguanine biosynthesis. Its function is as follows. Catalyzes the ATP-dependent conversion of 7-carboxy-7-deazaguanine (CDG) to 7-cyano-7-deazaguanine (preQ(0)). The sequence is that of 7-cyano-7-deazaguanine synthase from Porphyromonas gingivalis (strain ATCC 33277 / DSM 20709 / CIP 103683 / JCM 12257 / NCTC 11834 / 2561).